The primary structure comprises 258 residues: Glycerol-3-phosphate acyltransferase (258 aa).

Helical transmembrane passes span 11 to 31 (IILA…IIIV), 62 to 82 (LVVA…AILL), 94 to 114 (SYFI…YYKF), 124 to 144 (LGLL…IWFI), 160 to 180 (ALII…YFIW), and 212 to 232 (WASG…ILAW).

It belongs to the PlsY family. Probably interacts with PlsX.

It localises to the cell membrane. The enzyme catalyses an acyl phosphate + sn-glycerol 3-phosphate = a 1-acyl-sn-glycero-3-phosphate + phosphate. It participates in lipid metabolism; phospholipid metabolism. Catalyzes the transfer of an acyl group from acyl-phosphate (acyl-PO(4)) to glycerol-3-phosphate (G3P) to form lysophosphatidic acid (LPA). This enzyme utilizes acyl-phosphate as fatty acyl donor, but not acyl-CoA or acyl-ACP. In Mycoplasma mycoides subsp. mycoides SC (strain CCUG 32753 / NCTC 10114 / PG1), this protein is Glycerol-3-phosphate acyltransferase.